The primary structure comprises 395 residues: G-protein coupled receptor 182 (395 aa).

At 1–53 the chain is on the extracellular side; sequence MSVIPSPRPVSTLEPDNDFRDIHNWTELLHLFNQTFTDCHIEFNENTKHVVLF. Residues N24 and N33 are each glycosylated (N-linked (GlcNAc...) asparagine). A helical transmembrane segment spans residues 54-75; sequence VFYLAIFVVGLVENVLVICVNC. Topologically, residues 76–86 are cytoplasmic; it reads RRSGRVGMLNL. Residues 87–109 form a helical membrane-spanning segment; it reads YILNMAIADLGIILSLPVWMLEV. Residues 110–123 are Extracellular-facing; it reads MLEYTWLWGSFSCR. A disulfide bond links C122 and C198. Residues 124–145 form a helical membrane-spanning segment; the sequence is FIHYFYLVNMYSSIFFLTCLSI. Over 146–166 the chain is Cytoplasmic; the sequence is DRYVTLTNTSPSWQRHQHRIR. Residues 167-189 form a helical membrane-spanning segment; that stretch reads RAVCAGVWVLSAIIPLPEVVHIQ. Residues 190-213 lie on the Extracellular side of the membrane; that stretch reads LLDGSEPMCLFLAPFETYSAWALA. The helical transmembrane segment at 214 to 235 threads the bilayer; the sequence is VALSATILGFLLPFLLIAVFNI. At 236-254 the chain is on the cytoplasmic side; that stretch reads LTACRLRRQRQTESRRHCL. Residues 255 to 276 form a helical membrane-spanning segment; it reads LMWAYIVVFAICWLPYQVTMLL. At 277 to 295 the chain is on the extracellular side; sequence LTLHGTHIFLHCHLVNLLY. The helical transmembrane segment at 296 to 316 threads the bilayer; the sequence is FFYEIIDCFSMLHCVANPILY. Over 317 to 395 the chain is Cytoplasmic; it reads NFLSPSFRGR…QTPHLHSAIL (79 aa). Position 329 is a phosphoserine (S329).

It belongs to the G-protein coupled receptor 1 family. In terms of tissue distribution, expressed in liver and lung.

It localises to the cell membrane. Orphan receptor. The polypeptide is G-protein coupled receptor 182 (Gpr182) (Mus musculus (Mouse)).